The chain runs to 443 residues: Chromosomal replication initiator protein DnaA (443 aa).

Residues 1–76 (METKALWEKL…KSVLNSYVSV (76 aa)) form a domain I, interacts with DnaA modulators region. The domain II stretch occupies residues 76–99 (VDFLTKEIFEKNTKKENKKEPINT). The tract at residues 100-320 (VLSENALTFE…GLVNRLLFFG (221 aa)) is domain III, AAA+ region. ATP contacts are provided by G145, G147, K148, and T149. Residues 321–443 (IQNDLGHIID…ESLKNEIIGK (123 aa)) form a domain IV, binds dsDNA region.

It belongs to the DnaA family. Oligomerizes as a right-handed, spiral filament on DNA at oriC.

The protein resides in the cytoplasm. Plays an essential role in the initiation and regulation of chromosomal replication. ATP-DnaA binds to the origin of replication (oriC) to initiate formation of the DNA replication initiation complex once per cell cycle. Binds the DnaA box (a 9 base pair repeat at the origin) and separates the double-stranded (ds)DNA. Forms a right-handed helical filament on oriC DNA; dsDNA binds to the exterior of the filament while single-stranded (ss)DNA is stabiized in the filament's interior. The ATP-DnaA-oriC complex binds and stabilizes one strand of the AT-rich DNA unwinding element (DUE), permitting loading of DNA polymerase. After initiation quickly degrades to an ADP-DnaA complex that is not apt for DNA replication. Binds acidic phospholipids. This is Chromosomal replication initiator protein DnaA from Mesoplasma florum (strain ATCC 33453 / NBRC 100688 / NCTC 11704 / L1) (Acholeplasma florum).